A 358-amino-acid polypeptide reads, in one-letter code: Extracellular phospholipase C (358 aa).

The protein localises to the secreted. The polypeptide is Extracellular phospholipase C (plcA) (Dickeya chrysanthemi (Pectobacterium chrysanthemi)).